The sequence spans 466 residues: Putative ABC transporter ATP-binding protein MG065 (466 aa).

The ABC transporter domain maps to 233–463 (IELKNVYKYI…NLNPKQVEEI (231 aa)). An ATP-binding site is contributed by 269–276 (GPSGSGKT).

The protein belongs to the ABC transporter superfamily.

The polypeptide is Putative ABC transporter ATP-binding protein MG065 (Mycoplasma genitalium (strain ATCC 33530 / DSM 19775 / NCTC 10195 / G37) (Mycoplasmoides genitalium)).